A 440-amino-acid polypeptide reads, in one-letter code: Transposon Ty1-OL Gag polyprotein (440 aa).

3 stretches are compositionally biased toward polar residues: residues 1-23, 48-60, and 127-152; these read MESQ…SVTS, TKAN…TPAS, and QSQF…GNTF. Disordered stretches follow at residues 1-93, 126-173, and 352-440; these read MESQ…MMTQ, PQSQ…RPPP, and GSRN…PGTY. The span at 153-165 shows a compositional bias: low complexity; it reads TDSSSADSDMTST. Residues 299–401 form an RNA-binding region; that stretch reads NNGIHINNKV…NSKSKTARAH (103 aa). A compositionally biased stretch (low complexity) spans 402–418; it reads NVSTSNNSPSTDNDSIS. Ser416 is subject to Phosphoserine. Positions 419-428 are enriched in polar residues; sequence KSTTEPIQLN. Positions 429–440 are enriched in basic and acidic residues; it reads NKHDLHLRPGTY.

In terms of assembly, homotrimer.

The protein resides in the cytoplasm. In terms of biological role, capsid protein (CA) is the structural component of the virus-like particle (VLP), forming the shell that encapsulates the retrotransposons dimeric RNA genome. The particles are assembled from trimer-clustered units and there are holes in the capsid shells that allow for the diffusion of macromolecules. CA also has nucleocapsid-like chaperone activity, promoting primer tRNA(i)-Met annealing to the multipartite primer-binding site (PBS), dimerization of Ty1 RNA and initiation of reverse transcription. This Saccharomyces cerevisiae (strain ATCC 204508 / S288c) (Baker's yeast) protein is Transposon Ty1-OL Gag polyprotein (TY1A-OL).